A 188-amino-acid chain; its full sequence is Chitin synthase 1 (188 aa).

It belongs to the chitin synthase family. Class I subfamily.

It localises to the cell membrane. It carries out the reaction [(1-&gt;4)-N-acetyl-beta-D-glucosaminyl](n) + UDP-N-acetyl-alpha-D-glucosamine = [(1-&gt;4)-N-acetyl-beta-D-glucosaminyl](n+1) + UDP + H(+). Polymerizes chitin, a structural polymer of the cell wall and septum, by transferring the sugar moiety of UDP-GlcNAc to the non-reducing end of the growing chitin polymer. This is Chitin synthase 1 (CHS1) from Ajellomyces dermatitidis (Blastomyces dermatitidis).